The sequence spans 728 residues: Catalase-peroxidase (728 aa).

The interval 1 to 26 (MDNPTDTAGKCPVAHGNKPRGPSNRD) is disordered. The tryptophyl-tyrosyl-methioninium (Trp-Tyr) (with M-244) cross-link spans 96–218 (WHSAGTYRIT…LGAVQMGLIY (123 aa)). Catalysis depends on His97, which acts as the Proton acceptor. Residues 218–244 (YVNPEGPGGNPDPLASARDIRETFARM) constitute a cross-link (tryptophyl-tyrosyl-methioninium (Tyr-Met) (with W-96)). Residue His259 participates in heme b binding.

The protein belongs to the peroxidase family. Peroxidase/catalase subfamily. In terms of assembly, homodimer or homotetramer. It depends on heme b as a cofactor. Formation of the three residue Trp-Tyr-Met cross-link is important for the catalase, but not the peroxidase activity of the enzyme.

The enzyme catalyses H2O2 + AH2 = A + 2 H2O. The catalysed reaction is 2 H2O2 = O2 + 2 H2O. Its function is as follows. Bifunctional enzyme with both catalase and broad-spectrum peroxidase activity. The sequence is that of Catalase-peroxidase from Rhizobium etli (strain CIAT 652).